Reading from the N-terminus, the 411-residue chain is Protrudin (411 aa).

Positions 1-27 (MQTSEREGSGPELSPSVMPEAPLESPP) are disordered. At 1–66 (MQTSEREGSG…AGDGVRYLLR (66 aa)) the chain is on the cytoplasmic side. A sufficient for homooligomerization region spans residues 1-92 (MQTSEREGSG…LFLTLNEGAW (92 aa)). A sufficient for localization to endoplasmic reticulum tubular network and for interactions with REEP1, REEP5, ATL1, ATL2, ATL3 and SPAST region spans residues 1-205 (MQTSEREGSG…LYLLPLCWVL (205 aa)). Residues 51-64 (LEPLKDAGDGVRYL) are necessary for interaction with RAB11A and function in neurite outgrowth. The helical transmembrane segment at 67–87 (WQMPLCSLLTCLGLNVLFLTL) threads the bilayer. A topological domain (lumenal) is located at residue asparagine 88. The helical transmembrane segment at 89–109 (EGAWYSVGALMISVPALLGYL) threads the bilayer. The Cytoplasmic segment spans residues 110–187 (QEVCRARLPE…NPVVSSQFYG (78 aa)). Positions 188–208 (ALLGTICMLYLLPLCWVLTLL) form an intramembrane region, helical. Residues 209–411 (NSTLFLGNVE…CASCNQTLSK (203 aa)) lie on the Cytoplasmic side of the membrane. The disordered stretch occupies residues 234–286 (MNPKQEEHAFESPPPPDVGGKGGLMDSTPALTPTEDLTPGSVEEAEEAEPDEE). The tract at residues 271–361 (TPGSVEEAEE…GCSATFSVLK (91 aa)) is necessary for interaction with KIF5A. Residues 276–286 (EEAEEAEPDEE) show a composition bias toward acidic residues. Positions 286–292 (EFKDAIE) are necessary for interaction with VAPA. The segment at 344 to 410 (TNNFGNCTGC…VCASCNQTLS (67 aa)) adopts an FYVE-type zinc-finger fold. Zn(2+)-binding residues include cysteine 350, cysteine 353, cysteine 366, cysteine 369, cysteine 374, cysteine 377, cysteine 402, and cysteine 405.

Can form homooligomers (monomers, dimers and tetramers). Interacts with RAB11A (GDP-bound form); regulates RAB11A. Interacts with FKBP8; may negatively regulate ZFYVE27 phosphorylation. Interacts with VAPA (via MSP domain); may regulate ZFYVE27 retention in the endoplasmic reticulum and its function in cell projections formation. Interacts with VAPB (via MSP domain). Interacts with RAB11B (GDP-bound form), REEP1, REEP5, ATL1, ATL2, ATL3, SPAST, SURF4, KIF5A, KIF5B, KIF5C and RTN3. In terms of processing, phosphorylated. Phosphorylation is induced by NGF through the MAPK/ERK pathway and modulates interaction with RAB11A.

The protein localises to the recycling endosome membrane. The protein resides in the endoplasmic reticulum membrane. It is found in the cell projection. Its subcellular location is the growth cone membrane. Functionally, key regulator of RAB11-dependent vesicular trafficking during neurite extension through polarized membrane transport. Promotes axonal elongation and contributes to the establishment of neuronal cell polarity. Involved in nerve growth factor-induced neurite formation in VAPA-dependent manner. Contributes to both the formation and stabilization of the tubular ER network. Involved in ER morphogenesis by regulating the sheet-to-tubule balance and possibly the density of tubule interconnections. Acts as an adapter protein that facilitates the interaction of KIF5A with VAPA, VAPB, SURF4, RAB11A, RAB11B and RTN3 and the ZFYVE27-KIF5A complex contributes to the transport of these proteins in neurons. Can induce formation of neurite-like membrane protrusions in non-neuronal cells in a KIF5A/B-dependent manner. The sequence is that of Protrudin (ZFYVE27) from Pongo abelii (Sumatran orangutan).